The primary structure comprises 387 residues: Galactokinase (387 aa).

36-39 (EHTD) provides a ligand contact to substrate. ATP is bound by residues serine 70 and 125-131 (GAGLSSS). Mg(2+) is bound by residues serine 131 and glutamate 163. Aspartate 175 functions as the Proton acceptor in the catalytic mechanism. Residue tyrosine 227 participates in substrate binding.

The protein belongs to the GHMP kinase family. GalK subfamily.

The protein localises to the cytoplasm. The catalysed reaction is alpha-D-galactose + ATP = alpha-D-galactose 1-phosphate + ADP + H(+). It participates in carbohydrate metabolism; galactose metabolism. In terms of biological role, catalyzes the transfer of the gamma-phosphate of ATP to D-galactose to form alpha-D-galactose-1-phosphate (Gal-1-P). The chain is Galactokinase from Streptomyces coelicolor (strain ATCC BAA-471 / A3(2) / M145).